Consider the following 261-residue polypeptide: CD40 ligand (261 aa).

The Cytoplasmic portion of the chain corresponds to 1-22 (MIETYSQPSPRSVATGPPVSMK). Residues 23–46 (IFMYLLTVFLITQMIGSALFAVYL) form a helical; Signal-anchor for type II membrane protein membrane-spanning segment. The Extracellular segment spans residues 47–261 (HRRLDKIEDE…GFTSFGLLKL (215 aa)). The THD domain maps to 122-261 (IAAHVISEAS…GFTSFGLLKL (140 aa)). A disulfide bond links C178 and C218. N-linked (GlcNAc...) asparagine glycosylation is present at N240.

This sequence belongs to the tumor necrosis factor family. As to quaternary structure, homotrimer. Interacts with CD28. CD40 ligand, soluble form: Exists as either a monomer or a homotrimer. Forms a ternary complex between CD40 and integrins for CD40-CD40LG signaling. The soluble form derives from the membrane form by proteolytic processing.

Its subcellular location is the cell membrane. It localises to the cell surface. It is found in the secreted. Functionally, cytokine that acts as a ligand to CD40/TNFRSF5. Costimulates T-cell proliferation and cytokine production. Its cross-linking on T-cells generates a costimulatory signal which enhances the production of IL4 and IL10 in conjunction with the TCR/CD3 ligation and CD28 costimulation. Induces the activation of NF-kappa-B. Induces the activation of kinases MAPK8 and PAK2 in T-cells. Mediates B-cell proliferation in the absence of co-stimulus as well as IgE production in the presence of IL4. Involved in immunoglobulin class switching. In terms of biological role, acts as a ligand for integrins, specifically ITGA5:ITGB1 and ITGAV:ITGB3; both integrins and the CD40 receptor are required for activation of CD40-CD40LG signaling, which have cell-type dependent effects, such as B-cell activation, NF-kappa-B signaling and anti-apoptotic signaling. This chain is CD40 ligand (CD40LG), found in Bos taurus (Bovine).